The chain runs to 64 residues: Large ribosomal subunit protein bL35 (64 aa).

The interval Thr17–Thr41 is disordered. Residues Glu25–His35 show a composition bias toward basic and acidic residues.

Belongs to the bacterial ribosomal protein bL35 family.

This Chlorobaculum parvum (strain DSM 263 / NCIMB 8327) (Chlorobium vibrioforme subsp. thiosulfatophilum) protein is Large ribosomal subunit protein bL35.